The primary structure comprises 76 residues: UPF0291 protein Aflv_1503 (76 aa).

The segment at 56–76 (DPNGNDVTPQKLKDSKKKRLH) is disordered.

It belongs to the UPF0291 family.

The protein resides in the cytoplasm. The sequence is that of UPF0291 protein Aflv_1503 from Anoxybacillus flavithermus (strain DSM 21510 / WK1).